Consider the following 90-residue polypeptide: Small ribosomal subunit protein uS17 (90 aa).

This sequence belongs to the universal ribosomal protein uS17 family. As to quaternary structure, part of the 30S ribosomal subunit.

In terms of biological role, one of the primary rRNA binding proteins, it binds specifically to the 5'-end of 16S ribosomal RNA. The sequence is that of Small ribosomal subunit protein uS17 from Burkholderia multivorans (strain ATCC 17616 / 249).